The following is a 1016-amino-acid chain: Kinesin-like protein KIN-14K (1016 aa).

A Calponin-homology (CH) domain is found at 14–121; sequence ADRRAEVIEW…CLLVLRESVS (108 aa). Residues 123–176 are disordered; it reads GLRDGTSKAPLRKKWRVPETGEPLVPGVAQGKTSPGEDKRNGLPDPKSQQKTPI. Residues 288-354 are a coiled coil; sequence VNGTNEENQM…EVMTSMHEQQ (67 aa). The Kinesin motor domain occupies 481–808; it reads NIRVYCRVRP…LKFAERVSGV (328 aa). ATP is bound at residue 565-572; it reads GQTGSGKT. The stretch at 820–852 forms a coiled coil; it reads KDIKELLEQVASLKDTIVRKDTEIEQLQLMKDK. 2 stretches are compositionally biased toward polar residues: residues 884–893 and 990–1004; these read NQQSQLSDPQ and KTPNQTRVQSSQLIG. Disordered regions lie at residues 884–912 and 971–1016; these read NQQSQLSDPQSYAEVNRDGGPTSYTDITP and LTKN…RWQK.

The protein belongs to the TRAFAC class myosin-kinesin ATPase superfamily. Kinesin family. KIN-14 subfamily.

This Oryza sativa subsp. japonica (Rice) protein is Kinesin-like protein KIN-14K.